The following is a 348-amino-acid chain: Photosystem II protein D1 (348 aa).

A run of 3 helical transmembrane segments spans residues 33-50 (YIGWFGILMFPLLVLATV), 122-137 (HFIFGAGAYMGREWEF), and 146-160 (WIFVAFSAPLVAASA). H122 is a chlorophyll a binding site. Pheophytin a is bound at residue Y130. The [CaMn4O5] cluster site is built by D174 and E193. A helical membrane pass occupies residues 201–222 (FHILGVAAVFGGSLFSAMHGSL). Position 202 (H202) interacts with chlorophyll a. Residues H219 and 268–269 (SF) contribute to the a quinone site. H219 contacts Fe cation. H276 provides a ligand contact to Fe cation. Residues 278 to 292 (FLAAWPVIGIWFTSL) form a helical membrane-spanning segment. 4 residues coordinate [CaMn4O5] cluster: H336, E337, D346, and A348.

Belongs to the reaction center PufL/M/PsbA/D family. In terms of assembly, PSII is composed of 1 copy each of membrane proteins PsbA, PsbB, PsbC, PsbD, PsbE, PsbF, PsbH, PsbI, PsbJ, PsbK, PsbL, PsbM, PsbT, PsbX, PsbY, PsbZ, Psb30/Ycf12, at least 3 peripheral proteins of the oxygen-evolving complex and a large number of cofactors. It forms dimeric complexes. The D1/D2 heterodimer binds P680, chlorophylls that are the primary electron donor of PSII, and subsequent electron acceptors. It shares a non-heme iron and each subunit binds pheophytin, quinone, additional chlorophylls, carotenoids and lipids. D1 provides most of the ligands for the Mn4-Ca-O5 cluster of the oxygen-evolving complex (OEC). There is also a Cl(-1) ion associated with D1 and D2, which is required for oxygen evolution. The PSII complex binds additional chlorophylls, carotenoids and specific lipids. serves as cofactor. Post-translationally, tyr-165 forms a radical intermediate that is referred to as redox-active TyrZ, YZ or Y-Z.

Its subcellular location is the plastid. The protein resides in the chloroplast thylakoid membrane. The catalysed reaction is 2 a plastoquinone + 4 hnu + 2 H2O = 2 a plastoquinol + O2. Its function is as follows. Photosystem II (PSII) is a light-driven water:plastoquinone oxidoreductase that uses light energy to abstract electrons from H(2)O, generating O(2) and a proton gradient subsequently used for ATP formation. It consists of a core antenna complex that captures photons, and an electron transfer chain that converts photonic excitation into a charge separation. The D1/D2 (PsbA/PsbD) reaction center heterodimer binds P680, the primary electron donor of PSII as well as several subsequent electron acceptors. The protein is Photosystem II protein D1 of Heterocapsa triquetra (Dinoflagellate).